The chain runs to 59 residues: Putative conotoxin (59 aa).

Positions 1–25 (MGMRMMFTVFLLVVLATTVVPITLA) are cleaved as a signal peptide. Positions 26–47 (SATDGRNAAANARVSPVISKSS) are excised as a propeptide.

Belongs to the conotoxin A superfamily. In terms of tissue distribution, expressed by the venom duct.

It localises to the secreted. Its function is as follows. Acts as a neurotoxin. This Conus imperialis (Imperial cone) protein is Putative conotoxin.